A 150-amino-acid chain; its full sequence is UPF0756 membrane protein ABSDF1616 (150 aa).

The next 4 membrane-spanning stretches (helical) occupy residues 1–21, 45–65, 83–103, and 115–135; these read MLAQFDVNLVVLLVLLICGLL, FFPYIQAHGLNLGILILTIGV, FISFKSLVAIAIGLLVAWLGG, and VVAGLLIGTVAGVALLRGVPV.

The protein belongs to the UPF0756 family.

The protein localises to the cell membrane. This chain is UPF0756 membrane protein ABSDF1616, found in Acinetobacter baumannii (strain SDF).